Here is a 159-residue protein sequence, read N- to C-terminus: U1 small nuclear ribonucleoprotein C (159 aa).

The Matrin-type zinc-finger motif lies at 4 to 36 (FYCDYCDTYLTHDSPSVRKTHCSGRKHKENVKD). Disordered stretches follow at residues 63-95 (PPTPFAAPPAGSAMIPPPPSMGGPPRPGMMPAP) and 139-159 (MRPPTRPMMLQSRPGMARPDR). Over residues 77-95 (IPPPPSMGGPPRPGMMPAP) the composition is skewed to pro residues.

Belongs to the U1 small nuclear ribonucleoprotein C family. In terms of assembly, component of the U1 snRNP. The U1 snRNP is composed of the U1 snRNA and the 7 core Sm proteins snrpb, snrpd1, snrpd2, snrpd3, snrpe, snrpf and snrpg that assemble in a heptameric protein ring on the Sm site of the small nuclear RNA to form the core snRNP, and at least 3 U1 snRNP-specific proteins snrnp70/U1-70K, snrpa/U1-A and snrpc/U1-C. snrpc/U1-C interacts with U1 snRNA and the 5' splice-site region of the pre-mRNA.

Its subcellular location is the nucleus. Its function is as follows. Component of the spliceosomal U1 snRNP, which is essential for recognition of the pre-mRNA 5' splice-site and the subsequent assembly of the spliceosome. snrpc/U1-C is directly involved in initial 5' splice-site recognition for both constitutive and regulated alternative splicing. The interaction with the 5' splice-site seems to precede base-pairing between the pre-mRNA and the U1 snRNA. Stimulates commitment or early (E) complex formation by stabilizing the base pairing of the 5' end of the U1 snRNA and the 5' splice-site region. This Xenopus tropicalis (Western clawed frog) protein is U1 small nuclear ribonucleoprotein C.